The chain runs to 1425 residues: Death-associated protein kinase dapk-1 (1425 aa).

A Protein kinase domain is found at 28-289 (YEIETELGSG…VEECLQHPWI (262 aa)). ATP contacts are provided by residues 34-42 (LGSGQFAVV) and Lys-57. Asp-155 functions as the Proton acceptor in the catalytic mechanism. 10 ANK repeats span residues 392-421 (NGATAMHCAAKYGHAEVFNYFHMKGGNICA), 425-454 (NGDTPLHVACRFAQHTVAGYVANEKIDVDS), 458-487 (TGETALHCAVESADTRVVRLLLQLRPRLDL), 491-520 (SGDTVLHLAADSINPRIVPLLVCLAPPLHL), 524-553 (REETPLHVAAARGHVDCVQALLDANSPIDA), 557-586 (DGKTALIIALENGNVDIASILITNGCDINH), 590-619 (HGDTALHIASKHGLLQAVQTLCHCAVTVDS), 623-652 (NKKTALHLAAHYGHVDIIRVLLLARADVTL), 810-841 (GGYEPMHTCYDHFVGNADCIHLILYRTSDPTE), and 934-963 (IGMKTLKMELAKCRTNILAKLLKPLAILDT). Residues 695-950 (LDTSLRRIKL…MELAKCRTNI (256 aa)) enclose the Roc domain. Positions 1308-1389 (ELACLLDPPH…DARDALYRTV (82 aa)) constitute a Death domain.

It belongs to the protein kinase superfamily. CAMK Ser/Thr protein kinase family. DAP kinase subfamily. As to quaternary structure, interacts with ptrn-1. It depends on Mg(2+) as a cofactor. As to expression, expressed in epidermis, muscles and neurons.

Its subcellular location is the cytoplasm. The protein localises to the cytosol. It localises to the cytoskeleton. The catalysed reaction is L-seryl-[protein] + ATP = O-phospho-L-seryl-[protein] + ADP + H(+). It carries out the reaction L-threonyl-[protein] + ATP = O-phospho-L-threonyl-[protein] + ADP + H(+). In terms of biological role, negative regulator of epidermal barrier repair and innate immune responses to wounding. The role in epidermal tissue integrity and wound healing is established through the inhibition of epidermal microtubule stability, possibly via the negative regulation of the microtubule minus-end binding protein ptrn-1. In epidermis, prevents expression of specific unc-44 isoforms probably by promoting nuclear localization of pinn-1, which in turn may affect sydn-1-ssup-72-mediated regulation of alternative polyadenylation of unc-44 mRNA. Appears to act downstream of or in parallel to muscarinic signaling in the regulation of autophagy. The sequence is that of Death-associated protein kinase dapk-1 from Caenorhabditis elegans.